We begin with the raw amino-acid sequence, 548 residues long: Hydroxylamine reductase (548 aa).

Residues cysteine 3, cysteine 6, cysteine 15, and cysteine 21 each coordinate [4Fe-4S] cluster. Hybrid [4Fe-2O-2S] cluster is bound by residues histidine 240, glutamate 264, cysteine 308, cysteine 402, cysteine 430, cysteine 455, glutamate 490, and lysine 492. Cysteine 402 carries the cysteine persulfide modification.

It belongs to the HCP family. The cofactor is [4Fe-4S] cluster. Hybrid [4Fe-2O-2S] cluster serves as cofactor.

Its subcellular location is the cytoplasm. It catalyses the reaction A + NH4(+) + H2O = hydroxylamine + AH2 + H(+). Functionally, catalyzes the reduction of hydroxylamine to form NH(3) and H(2)O. The sequence is that of Hydroxylamine reductase from Parabacteroides distasonis (strain ATCC 8503 / DSM 20701 / CIP 104284 / JCM 5825 / NCTC 11152).